A 213-amino-acid chain; its full sequence is MSGSSNVENLSPQIIRQVAKEVLDLANHPPEGVKVFPNEQDITDVQATIEGPGGTPYEGGQFKIKLSLGKDFPQTPPKGFFLTKIFHPNVAKNGEICVNTLKKDWKADLGLKHILLTIKCLLIYPNPESALNEEAGKLLLEQYDNYSERARMMTEIHAKPTTKTAPTKNEETNCPSTSGTQSTSEGPMAKKHAGDKNAAEKKKKEKKRALRRL.

The UBC core domain occupies 13-159 (QIIRQVAKEV…ARMMTEIHAK (147 aa)). Residue C97 is the Glycyl thioester intermediate of the active site. The disordered stretch occupies residues 157 to 213 (HAKPTTKTAPTKNEETNCPSTSGTQSTSEGPMAKKHAGDKNAAEKKKKEKKRALRRL). A compositionally biased stretch (polar residues) spans 174 to 185 (CPSTSGTQSTSE). Over residues 192–202 (HAGDKNAAEKK) the composition is skewed to basic and acidic residues. Residues 203–213 (KKEKKRALRRL) are compositionally biased toward basic residues.

This sequence belongs to the ubiquitin-conjugating enzyme family.

The catalysed reaction is S-ubiquitinyl-[E1 ubiquitin-activating enzyme]-L-cysteine + [E2 ubiquitin-conjugating enzyme]-L-cysteine = [E1 ubiquitin-activating enzyme]-L-cysteine + S-ubiquitinyl-[E2 ubiquitin-conjugating enzyme]-L-cysteine.. It functions in the pathway protein modification; protein ubiquitination. In terms of biological role, catalyzes the covalent attachment of ubiquitin to other proteins. Acts as an essential factor of the anaphase promoting complex/cyclosome (APC/C), a cell cycle-regulated ubiquitin ligase that controls progression through mitosis. Acts by specifically elongating polyubiquitin chains initiated by the E2 enzyme UBCH10 on APC/C substrates, enhancing the degradation of APC/C substrates by the proteasome and promoting mitotic exit. The chain is Ubiquitin-conjugating enzyme E2 S from Branchiostoma floridae (Florida lancelet).